A 588-amino-acid chain; its full sequence is Calcium/calmodulin-dependent protein kinase kinase 2 (588 aa).

Residues 1 to 14 show a composition bias toward polar residues; that stretch reads MSSCVSSQPSSNRA. 2 disordered regions span residues 1-33 and 78-100; these read MSSCVSSQPSSNRAAPQDELGGRGSSSSESQKP and GQEVPLDTSGSQARPHLSGRKLS. Position 2 is an N-acetylserine (serine 2). Serine 100, serine 114, serine 129, serine 133, and serine 137 each carry phosphoserine. Over residues 128-139 the composition is skewed to low complexity; that stretch reads YSPVSSPQSSPR. The disordered stretch occupies residues 128-149; it reads YSPVSSPQSSPRLPRRPTVESH. Positions 165–446 constitute a Protein kinase domain; the sequence is YTLKDEIGKG…VPEIKLHPWV (282 aa). ATP is bound by residues 171–179 and lysine 194; that span reads IGKGSYGVV. The interval 204–226 is RP domain; it reads QAGFPRRPPPRGTRPAPGGCIQP. The tract at residues 205–225 is disordered; it reads AGFPRRPPPRGTRPAPGGCIQ. Aspartate 312 acts as the Proton acceptor in catalysis. Residues 472 to 477 form an autoinhibitory domain region; the sequence is ENSVKH. The tract at residues 475–500 is calmodulin-binding; that stretch reads VKHIPSLATVILVKTMIRKRSFGNPF. A phosphoserine mark is found at proline 479, serine 495, serine 511, threonine 522, and serine 572. A disordered region spans residues 497–588; the sequence is GNPFEGSRRE…LRPEEAMEPE (92 aa). Over residues 521–536 the composition is skewed to basic and acidic residues; it reads PTRECESLSELKEARQ. Over residues 579 to 588 the composition is skewed to basic and acidic residues; the sequence is LRPEEAMEPE.

It belongs to the protein kinase superfamily. Ser/Thr protein kinase family. Interacts with calmodulin. In terms of processing, autophosphorylated and phosphorylated by PKA. Each isoform may show a different pattern of phosphorylation. Ubiquitously expressed with higher levels in the brain. Intermediate levels are detected in spleen, prostate, thyroid and leukocytes. The lowest level is in lung.

It localises to the nucleus. The protein resides in the cytoplasm. It is found in the cell projection. Its subcellular location is the neuron projection. It catalyses the reaction L-seryl-[protein] + ATP = O-phospho-L-seryl-[protein] + ADP + H(+). It carries out the reaction L-threonyl-[protein] + ATP = O-phospho-L-threonyl-[protein] + ADP + H(+). Activated by Ca(2+)/calmodulin. Binding of calmodulin may relieve intrasteric autoinhibition. Autophosphorylation does not alter activity or regulation by Ca(2+)/calmodulin. In part, activity is independent on Ca(2+)/calmodulin. Calcium/calmodulin-dependent protein kinase belonging to a proposed calcium-triggered signaling cascade involved in a number of cellular processes. Isoform 1, isoform 2 and isoform 3 phosphorylate CAMK1 and CAMK4. Isoform 3 phosphorylates CAMK1D. Isoform 4, isoform 5 and isoform 6 lacking part of the calmodulin-binding domain are inactive. Efficiently phosphorylates 5'-AMP-activated protein kinase (AMPK) trimer, including that consisting of PRKAA1, PRKAB1 and PRKAG1. This phosphorylation is stimulated in response to Ca(2+) signals. Seems to be involved in hippocampal activation of CREB1. May play a role in neurite growth. Isoform 3 may promote neurite elongation, while isoform 1 may promoter neurite branching. The protein is Calcium/calmodulin-dependent protein kinase kinase 2 (CAMKK2) of Homo sapiens (Human).